The following is an 86-amino-acid chain: Large ribosomal subunit protein uL23 (86 aa).

The protein belongs to the universal ribosomal protein uL23 family. Part of the 50S ribosomal subunit. Contacts protein L29.

Its function is as follows. Binds to 23S rRNA. One of the proteins that surrounds the polypeptide exit tunnel on the outside of the ribosome. This is Large ribosomal subunit protein uL23 from Methanococcus aeolicus (strain ATCC BAA-1280 / DSM 17508 / OCM 812 / Nankai-3).